Here is a 62-residue protein sequence, read N- to C-terminus: MSRKCAISGKGPMVGNNVSHAKNRTRRRFLPNIRTVRVTLEDGTTTKLRISAKELRTLKKHS.

This sequence belongs to the bacterial ribosomal protein bL28 family.

The protein is Large ribosomal subunit protein bL28 of Aliarcobacter butzleri (strain RM4018) (Arcobacter butzleri).